Here is a 258-residue protein sequence, read N- to C-terminus: UPF0246 protein YaaA (258 aa).

Belongs to the UPF0246 family.

The sequence is that of UPF0246 protein YaaA from Escherichia coli O157:H7.